A 469-amino-acid polypeptide reads, in one-letter code: Chromosomal replication initiator protein DnaA (469 aa).

The segment at 1–71 (MKEFWQTCVS…EALAAEWYQR (71 aa)) is domain I, interacts with DnaA modulators. Residues 71–131 (RPVQVTFELP…DAANIVYERS (61 aa)) form a domain II region. The domain III, AAA+ region stretch occupies residues 132 to 348 (RLNTDLTFEN…GALRKVLAYA (217 aa)). ATP-binding residues include glycine 176, glycine 178, lysine 179, and threonine 180. The domain IV, binds dsDNA stretch occupies residues 349–469 (RFHGRDVLTV…LHVLEQTLKG (121 aa)).

This sequence belongs to the DnaA family. As to quaternary structure, oligomerizes as a right-handed, spiral filament on DNA at oriC.

The protein resides in the cytoplasm. Plays an essential role in the initiation and regulation of chromosomal replication. ATP-DnaA binds to the origin of replication (oriC) to initiate formation of the DNA replication initiation complex once per cell cycle. Binds the DnaA box (a 9 base pair repeat at the origin) and separates the double-stranded (ds)DNA. Forms a right-handed helical filament on oriC DNA; dsDNA binds to the exterior of the filament while single-stranded (ss)DNA is stabiized in the filament's interior. The ATP-DnaA-oriC complex binds and stabilizes one strand of the AT-rich DNA unwinding element (DUE), permitting loading of DNA polymerase. After initiation quickly degrades to an ADP-DnaA complex that is not apt for DNA replication. Binds acidic phospholipids. The sequence is that of Chromosomal replication initiator protein DnaA from Bordetella parapertussis (strain 12822 / ATCC BAA-587 / NCTC 13253).